We begin with the raw amino-acid sequence, 182 residues long: Ribosome-recycling factor (182 aa).

It belongs to the RRF family.

The protein localises to the cytoplasm. Its function is as follows. Responsible for the release of ribosomes from messenger RNA at the termination of protein biosynthesis. May increase the efficiency of translation by recycling ribosomes from one round of translation to another. The sequence is that of Ribosome-recycling factor from Parasynechococcus marenigrum (strain WH8102).